A 442-amino-acid polypeptide reads, in one-letter code: UDP-glycosyltransferase 78D4 (442 aa).

Residues 322-324 (APQ), 339-347 (HGGWNSVLE), and 361-364 (FGDH) each bind UDP-alpha-D-glucose.

The protein belongs to the UDP-glycosyltransferase family.

This chain is UDP-glycosyltransferase 78D4 (UGT78D4), found in Arabidopsis thaliana (Mouse-ear cress).